Reading from the N-terminus, the 52-residue chain is Conotoxin Cal9.2d (52 aa).

A propeptide spanning residues 1-6 (KRGVTL) is cleaved from the precursor. 3 cysteine pairs are disulfide-bonded: C14/C31, C19/C41, and C21/C46.

In terms of tissue distribution, expressed by the venom duct.

The protein localises to the secreted. In terms of biological role, probable neurotoxin with unknown target. Possibly targets ion channels. The chain is Conotoxin Cal9.2d from Californiconus californicus (California cone).